We begin with the raw amino-acid sequence, 500 residues long: Aspartyl/glutamyl-tRNA(Asn/Gln) amidotransferase subunit B (500 aa).

Belongs to the GatB/GatE family. GatB subfamily. As to quaternary structure, heterotrimer of A, B and C subunits.

It catalyses the reaction L-glutamyl-tRNA(Gln) + L-glutamine + ATP + H2O = L-glutaminyl-tRNA(Gln) + L-glutamate + ADP + phosphate + H(+). The catalysed reaction is L-aspartyl-tRNA(Asn) + L-glutamine + ATP + H2O = L-asparaginyl-tRNA(Asn) + L-glutamate + ADP + phosphate + 2 H(+). Functionally, allows the formation of correctly charged Asn-tRNA(Asn) or Gln-tRNA(Gln) through the transamidation of misacylated Asp-tRNA(Asn) or Glu-tRNA(Gln) in organisms which lack either or both of asparaginyl-tRNA or glutaminyl-tRNA synthetases. The reaction takes place in the presence of glutamine and ATP through an activated phospho-Asp-tRNA(Asn) or phospho-Glu-tRNA(Gln). The sequence is that of Aspartyl/glutamyl-tRNA(Asn/Gln) amidotransferase subunit B from Sinorhizobium medicae (strain WSM419) (Ensifer medicae).